The following is a 304-amino-acid chain: Acetyl-coenzyme A carboxylase carboxyl transferase subunit beta (304 aa).

In terms of domain architecture, CoA carboxyltransferase N-terminal spans 29–298; it reads LWSKCESCGA…ASDVSPAAVP (270 aa). Positions 33, 36, 52, and 55 each coordinate Zn(2+). The segment at 33 to 55 adopts a C4-type zinc-finger fold; that stretch reads CESCGALTYTKDLRANQMVCLEC.

It belongs to the AccD/PCCB family. As to quaternary structure, acetyl-CoA carboxylase is a heterohexamer composed of biotin carboxyl carrier protein (AccB), biotin carboxylase (AccC) and two subunits each of ACCase subunit alpha (AccA) and ACCase subunit beta (AccD). Zn(2+) is required as a cofactor.

Its subcellular location is the cytoplasm. It catalyses the reaction N(6)-carboxybiotinyl-L-lysyl-[protein] + acetyl-CoA = N(6)-biotinyl-L-lysyl-[protein] + malonyl-CoA. The protein operates within lipid metabolism; malonyl-CoA biosynthesis; malonyl-CoA from acetyl-CoA: step 1/1. Component of the acetyl coenzyme A carboxylase (ACC) complex. Biotin carboxylase (BC) catalyzes the carboxylation of biotin on its carrier protein (BCCP) and then the CO(2) group is transferred by the transcarboxylase to acetyl-CoA to form malonyl-CoA. This is Acetyl-coenzyme A carboxylase carboxyl transferase subunit beta from Acaryochloris marina (strain MBIC 11017).